The primary structure comprises 264 residues: S-adenosylmethionine decarboxylase proenzyme (264 aa).

Catalysis depends on Ser-112, which acts as the Schiff-base intermediate with substrate; via pyruvic acid. Ser-112 bears the Pyruvic acid (Ser); by autocatalysis mark. His-117 serves as the catalytic Proton acceptor; for processing activity. Cys-140 functions as the Proton donor; for catalytic activity in the catalytic mechanism.

It belongs to the prokaryotic AdoMetDC family. Type 2 subfamily. As to quaternary structure, heterooctamer of four alpha and four beta chains arranged as a tetramer of alpha/beta heterodimers. Pyruvate serves as cofactor. In terms of processing, is synthesized initially as an inactive proenzyme. Formation of the active enzyme involves a self-maturation process in which the active site pyruvoyl group is generated from an internal serine residue via an autocatalytic post-translational modification. Two non-identical subunits are generated from the proenzyme in this reaction, and the pyruvate is formed at the N-terminus of the alpha chain, which is derived from the carboxyl end of the proenzyme. The post-translation cleavage follows an unusual pathway, termed non-hydrolytic serinolysis, in which the side chain hydroxyl group of the serine supplies its oxygen atom to form the C-terminus of the beta chain, while the remainder of the serine residue undergoes an oxidative deamination to produce ammonia and the pyruvoyl group blocking the N-terminus of the alpha chain.

The enzyme catalyses S-adenosyl-L-methionine + H(+) = S-adenosyl 3-(methylsulfanyl)propylamine + CO2. Its pathway is amine and polyamine biosynthesis; S-adenosylmethioninamine biosynthesis; S-adenosylmethioninamine from S-adenosyl-L-methionine: step 1/1. Functionally, catalyzes the decarboxylation of S-adenosylmethionine to S-adenosylmethioninamine (dcAdoMet), the propylamine donor required for the synthesis of the polyamines spermine and spermidine from the diamine putrescine. This Serratia proteamaculans (strain 568) protein is S-adenosylmethionine decarboxylase proenzyme.